The chain runs to 145 residues: Ribosome-binding factor A (145 aa).

The tract at residues 126 to 145 (RDLDTETDAEAGSETTKEED) is disordered. Residues 130–145 (TETDAEAGSETTKEED) show a composition bias toward acidic residues.

It belongs to the RbfA family. In terms of assembly, monomer. Binds 30S ribosomal subunits, but not 50S ribosomal subunits or 70S ribosomes.

The protein resides in the cytoplasm. Its function is as follows. One of several proteins that assist in the late maturation steps of the functional core of the 30S ribosomal subunit. Associates with free 30S ribosomal subunits (but not with 30S subunits that are part of 70S ribosomes or polysomes). Required for efficient processing of 16S rRNA. May interact with the 5'-terminal helix region of 16S rRNA. The protein is Ribosome-binding factor A of Azorhizobium caulinodans (strain ATCC 43989 / DSM 5975 / JCM 20966 / LMG 6465 / NBRC 14845 / NCIMB 13405 / ORS 571).